A 288-amino-acid chain; its full sequence is Acetyl-coenzyme A carboxylase carboxyl transferase subunit beta (288 aa).

The CoA carboxyltransferase N-terminal domain maps to 34-288 (LFAKCPACKH…HLVAFHGGGQ (255 aa)). 4 residues coordinate Zn(2+): C38, C41, C56, and C59. A C4-type zinc finger spans residues 38 to 59 (CPACKHMIYKKDLGLAKICPTC).

This sequence belongs to the AccD/PCCB family. Acetyl-CoA carboxylase is a heterohexamer composed of biotin carboxyl carrier protein (AccB), biotin carboxylase (AccC) and two subunits each of ACCase subunit alpha (AccA) and ACCase subunit beta (AccD). The cofactor is Zn(2+).

It localises to the cytoplasm. It carries out the reaction N(6)-carboxybiotinyl-L-lysyl-[protein] + acetyl-CoA = N(6)-biotinyl-L-lysyl-[protein] + malonyl-CoA. It functions in the pathway lipid metabolism; malonyl-CoA biosynthesis; malonyl-CoA from acetyl-CoA: step 1/1. In terms of biological role, component of the acetyl coenzyme A carboxylase (ACC) complex. Biotin carboxylase (BC) catalyzes the carboxylation of biotin on its carrier protein (BCCP) and then the CO(2) group is transferred by the transcarboxylase to acetyl-CoA to form malonyl-CoA. The sequence is that of Acetyl-coenzyme A carboxylase carboxyl transferase subunit beta from Streptococcus pyogenes serotype M1.